Consider the following 380-residue polypeptide: Growth-regulating factor 4 (380 aa).

The interval 1-21 (MDLQLKQWRSQQQNESEEQGS) is disordered. In terms of domain architecture, QLQ spans 82-117 (FFSWAQWQELELQALIYRYMLAGASVPQELLLPIKK). The 45-residue stretch at 151–195 (DPEPGRCKRTDGKKWRCSRDVVAGHKYCDRHIHRGRNRSRKPVET) folds into the WRC domain. 2 short sequence motifs (bipartite nuclear localization signal) span residues 156–166 (RCKRTDGKKWR) and 184–191 (RGRNRSRK). Disordered stretches follow at residues 222–270 (NNNH…GRSD) and 284–330 (RSSD…NMRN). 2 stretches are compositionally biased toward low complexity: residues 228–245 (SSGS…SCSS) and 285–296 (SSDSTSSPMSSS). Positions 297 to 320 (TCHLSISMPGNNTSSDVSLKLSTG) are enriched in polar residues.

Belongs to the GRF family. Strongly expressed in actively growing and developing tissues, such as roots, upper stems, and shoot tips containing the shoot apical meristem (SAM) and flower buds. Also expressed in mature flowers, but weakly expressed in mature stems and leaves.

It localises to the nucleus. Functionally, transcription activator that plays a role in the regulation of cell expansion in leaf and cotyledons tissues. Component of a network formed by miR396, the GRFs and their interacting factors (GIFs) acting in the regulation of meristem function, at least partially through the control of cell proliferation. The polypeptide is Growth-regulating factor 4 (GRF4) (Arabidopsis thaliana (Mouse-ear cress)).